Consider the following 114-residue polypeptide: MVKTFQAYLPSTNRTYSCVHCRAHLASHDELISKSFQGSQGPAYLFNSVVNVACGQTEERVLLTGLHAVADIYCECCKTPLGWKYEHAYESSQKYKEGKFIIELAHMIKENGWD.

The region spanning 14–111 (RTYSCVHCRA…IELAHMIKEN (98 aa)) is the Yippee domain. Cysteine 18, cysteine 21, cysteine 74, and cysteine 77 together coordinate Zn(2+).

This sequence belongs to the yippee family.

Its function is as follows. Involved in regulating synaptic transmission in presynaptic neurons. In class IV dendritic arborization neurons (nociceptors), involved in regulating activation of their second-order neurons (SONs) and maintaining synaptic contact between nociceptors and their SONs. The sequence is that of Protein yippee-like from Drosophila melanogaster (Fruit fly).